The primary structure comprises 180 residues: Large ribosomal subunit protein uL6 (180 aa).

This sequence belongs to the universal ribosomal protein uL6 family. In terms of assembly, part of the 50S ribosomal subunit.

Its function is as follows. This protein binds to the 23S rRNA, and is important in its secondary structure. It is located near the subunit interface in the base of the L7/L12 stalk, and near the tRNA binding site of the peptidyltransferase center. In Salinispora arenicola (strain CNS-205), this protein is Large ribosomal subunit protein uL6.